A 370-amino-acid chain; its full sequence is Chorismate synthase (370 aa).

The disordered stretch occupies residues 41–60 (IQGDLDRRKPGTSRHVTQRK). Residues arginine 48 and arginine 54 each coordinate NADP(+). FMN contacts are provided by residues 125-127 (RSS), 238-239 (NA), glycine 278, 293-297 (KPTSS), and arginine 319.

The protein belongs to the chorismate synthase family. As to quaternary structure, homotetramer. FMNH2 is required as a cofactor.

The enzyme catalyses 5-O-(1-carboxyvinyl)-3-phosphoshikimate = chorismate + phosphate. Its pathway is metabolic intermediate biosynthesis; chorismate biosynthesis; chorismate from D-erythrose 4-phosphate and phosphoenolpyruvate: step 7/7. Its function is as follows. Catalyzes the anti-1,4-elimination of the C-3 phosphate and the C-6 proR hydrogen from 5-enolpyruvylshikimate-3-phosphate (EPSP) to yield chorismate, which is the branch point compound that serves as the starting substrate for the three terminal pathways of aromatic amino acid biosynthesis. This reaction introduces a second double bond into the aromatic ring system. The polypeptide is Chorismate synthase (Cupriavidus pinatubonensis (strain JMP 134 / LMG 1197) (Cupriavidus necator (strain JMP 134))).